The following is a 126-amino-acid chain: Small ribosomal subunit protein uS12 (126 aa).

Residues 1-28 form a disordered region; it reads MPTINQLVRKGRQSETTKSKSPALQDCP. Asp89 bears the 3-methylthioaspartic acid mark. The disordered stretch occupies residues 103–126; that stretch reads DTQGVKDRKQARSKYGAKRAKAAK. Basic residues predominate over residues 113–126; sequence ARSKYGAKRAKAAK.

It belongs to the universal ribosomal protein uS12 family. Part of the 30S ribosomal subunit. Contacts proteins S8 and S17. May interact with IF1 in the 30S initiation complex.

With S4 and S5 plays an important role in translational accuracy. Functionally, interacts with and stabilizes bases of the 16S rRNA that are involved in tRNA selection in the A site and with the mRNA backbone. Located at the interface of the 30S and 50S subunits, it traverses the body of the 30S subunit contacting proteins on the other side and probably holding the rRNA structure together. The combined cluster of proteins S8, S12 and S17 appears to hold together the shoulder and platform of the 30S subunit. The polypeptide is Small ribosomal subunit protein uS12 (Burkholderia orbicola (strain MC0-3)).